We begin with the raw amino-acid sequence, 208 residues long: Probable DNA-3-methyladenine glycosylase (208 aa).

It belongs to the DNA glycosylase MPG family.

It localises to the nucleus. The enzyme catalyses Hydrolysis of alkylated DNA, releasing 3-methyladenine, 3-methylguanine, 7-methylguanine and 7-methyladenine.. Functionally, hydrolysis of the deoxyribose N-glycosidic bond to excise 3-methyladenine, and 7-methylguanine from the damaged DNA polymer formed by alkylation lesions. This Encephalitozoon cuniculi (strain GB-M1) (Microsporidian parasite) protein is Probable DNA-3-methyladenine glycosylase.